A 213-amino-acid polypeptide reads, in one-letter code: Small ribosomal subunit protein uS4 (213 aa).

The disordered stretch occupies residues 16-53 (GTDLGLKSGVKPYDVKTKKSARPPGQHGVSRNKSSEYS). Over residues 44–53 (VSRNKSSEYS) the composition is skewed to polar residues. Residues 97-163 (SRLDNVVYRM…EKSREQLRIK (67 aa)) form the S4 RNA-binding domain.

It belongs to the universal ribosomal protein uS4 family. As to quaternary structure, part of the 30S ribosomal subunit. Contacts protein S5. The interaction surface between S4 and S5 is involved in control of translational fidelity.

One of the primary rRNA binding proteins, it binds directly to 16S rRNA where it nucleates assembly of the body of the 30S subunit. In terms of biological role, with S5 and S12 plays an important role in translational accuracy. In Psychrobacter arcticus (strain DSM 17307 / VKM B-2377 / 273-4), this protein is Small ribosomal subunit protein uS4.